The chain runs to 347 residues: F-box/LRR-repeat/kelch-repeat protein At2g27520 (347 aa).

An F-box domain is found at 1-50; that stretch reads MVRLDLPWDLVDEILSRLPATSLGRLRFTCKRWNALFKDPEFITKQFHKA. LRR repeat units lie at residues 59–82, 152–177, 196–220, and 261–285; these read LSNF…EIAQ, CKLV…NVEK, KFNI…LYQD, and LSWS…ILRI. A Kelch 1 repeat occupies 138-187; sequence KSYDSYKILRITYGCKLVEIFELKSNSWRVLSKVHPNVEKHYYGGVSFKG. The stretch at 306–347 is one Kelch 2 repeat; it reads MIYIVGKNGFKKLSYEKDRSNLWRLPFFFSYVPSLVGLYPPM.

This is F-box/LRR-repeat/kelch-repeat protein At2g27520 from Arabidopsis thaliana (Mouse-ear cress).